The chain runs to 452 residues: Cell division protein FtsZ (452 aa).

GTP-binding positions include 24–28 (GAGSN), 111–113 (GTG), glutamate 142, arginine 146, and aspartate 190.

The protein belongs to the FtsZ family. As to quaternary structure, homodimer. Polymerizes to form a dynamic ring structure in a strictly GTP-dependent manner. Interacts directly with several other division proteins.

The protein resides in the cytoplasm. Essential cell division protein that forms a contractile ring structure (Z ring) at the future cell division site. The regulation of the ring assembly controls the timing and the location of cell division. One of the functions of the FtsZ ring is to recruit other cell division proteins to the septum to produce a new cell wall between the dividing cells. Binds GTP and shows GTPase activity. The sequence is that of Cell division protein FtsZ from Rickettsia typhi (strain ATCC VR-144 / Wilmington).